Consider the following 34-residue polypeptide: Photosystem II reaction center protein Psb30 (34 aa).

A helical membrane pass occupies residues Val-6–Val-26.

This sequence belongs to the Psb30/Ycf12 family. PSII is composed of 1 copy each of membrane proteins PsbA, PsbB, PsbC, PsbD, PsbE, PsbF, PsbH, PsbI, PsbJ, PsbK, PsbL, PsbM, PsbT, PsbX, PsbY, PsbZ, Psb30/Ycf12, peripheral proteins of the oxygen-evolving complex and a large number of cofactors. It forms dimeric complexes.

The protein resides in the plastid. The protein localises to the chloroplast thylakoid membrane. Its function is as follows. A core subunit of photosystem II (PSII), probably helps stabilize the reaction center. The sequence is that of Photosystem II reaction center protein Psb30 from Gracilaria tenuistipitata var. liui (Red alga).